Reading from the N-terminus, the 234-residue chain is Zinc finger FYVE domain-containing protein 21 (234 aa).

Residues 44-104 (DKECPRCMQC…QCADCALVSH (61 aa)) form an FYVE-type zinc finger. The Zn(2+) site is built by Cys50, Cys53, Cys66, Cys69, Cys74, Cys77, Cys96, and Cys99. Residues 107–234 (AEFYDKQLKV…TKLLYESRDQ (128 aa)) are PH-like.

As to quaternary structure, interacts with PTK2/FAK1.

It is found in the cell junction. It localises to the focal adhesion. The protein localises to the cytoplasmic vesicle. The protein resides in the endosome. Its function is as follows. Plays a role in cell adhesion, and thereby in cell motility which requires repeated formation and disassembly of focal adhesions. Regulates microtubule-induced PTK2/FAK1 dephosphorylation, an event important for focal adhesion disassembly, as well as integrin beta-1/ITGB1 cell surface expression. This is Zinc finger FYVE domain-containing protein 21 (Zfyve21) from Rattus norvegicus (Rat).